We begin with the raw amino-acid sequence, 522 residues long: Glutamate--cysteine ligase (522 aa).

This sequence belongs to the glutamate--cysteine ligase type 1 family. Type 1 subfamily.

The catalysed reaction is L-cysteine + L-glutamate + ATP = gamma-L-glutamyl-L-cysteine + ADP + phosphate + H(+). The protein operates within sulfur metabolism; glutathione biosynthesis; glutathione from L-cysteine and L-glutamate: step 1/2. The polypeptide is Glutamate--cysteine ligase (Vibrio parahaemolyticus serotype O3:K6 (strain RIMD 2210633)).